The chain runs to 249 residues: Proteasome subunit alpha type-3 (249 aa).

It belongs to the peptidase T1A family. In terms of assembly, the 26S proteasome consists of a 20S proteasome core and two 19S regulatory subunits. The 20S proteasome core is composed of 28 subunits that are arranged in four stacked rings, resulting in a barrel-shaped structure. The two end rings are each formed by seven alpha subunits, and the two central rings are each formed by seven beta subunits. The catalytic chamber with the active sites is on the inside of the barrel.

It is found in the cytoplasm. It localises to the nucleus. The proteasome is a multicatalytic proteinase complex which is characterized by its ability to cleave peptides with Arg, Phe, Tyr, Leu, and Glu adjacent to the leaving group at neutral or slightly basic pH. The proteasome has an ATP-dependent proteolytic activity. The protein is Proteasome subunit alpha type-3 (PAG1) of Oryza sativa subsp. japonica (Rice).